The primary structure comprises 126 residues: Ribosome-binding factor A (126 aa).

It belongs to the RbfA family. Monomer. Binds 30S ribosomal subunits, but not 50S ribosomal subunits or 70S ribosomes.

It is found in the cytoplasm. One of several proteins that assist in the late maturation steps of the functional core of the 30S ribosomal subunit. Associates with free 30S ribosomal subunits (but not with 30S subunits that are part of 70S ribosomes or polysomes). Required for efficient processing of 16S rRNA. May interact with the 5'-terminal helix region of 16S rRNA. In Treponema pallidum (strain Nichols), this protein is Ribosome-binding factor A.